The chain runs to 101 residues: Small ribosomal subunit protein uS14 (101 aa).

Residues 1–20 are disordered; sequence MAKISAVERNKKRERLTKRD.

Belongs to the universal ribosomal protein uS14 family. Part of the 30S ribosomal subunit. Contacts proteins S3 and S10.

Binds 16S rRNA, required for the assembly of 30S particles and may also be responsible for determining the conformation of the 16S rRNA at the A site. This chain is Small ribosomal subunit protein uS14, found in Rhodospirillum rubrum (strain ATCC 11170 / ATH 1.1.1 / DSM 467 / LMG 4362 / NCIMB 8255 / S1).